A 302-amino-acid chain; its full sequence is NAD kinase (302 aa).

The active-site Proton acceptor is D79. NAD(+) contacts are provided by residues 79-80 (DG), 153-154 (ND), R181, D183, 194-199 (TAYALS), A218, and Q252.

It belongs to the NAD kinase family. The cofactor is a divalent metal cation.

It is found in the cytoplasm. It carries out the reaction NAD(+) + ATP = ADP + NADP(+) + H(+). In terms of biological role, involved in the regulation of the intracellular balance of NAD and NADP, and is a key enzyme in the biosynthesis of NADP. Catalyzes specifically the phosphorylation on 2'-hydroxyl of the adenosine moiety of NAD to yield NADP. This chain is NAD kinase, found in Ralstonia nicotianae (strain ATCC BAA-1114 / GMI1000) (Ralstonia solanacearum).